A 250-amino-acid chain; its full sequence is Keratin-associated protein 9-1 (250 aa).

32 consecutive repeat copies span residues 8-12 (CCQPT), 13-17 (CCRTT), 18-22 (CCRTT), 37-41 (CCQPS), 42-46 (CCVPS), 51-55 (CCHPT), 56-60 (CCQNT), 61-65 (CCRTT), 66-70 (CCQPT), 75-79 (CCQPS), 80-84 (CCSTP), 85-89 (CCQPT), 90-94 (CCGSS), 95-99 (CCGQT), 105-109 (CCQPI), 114-117 (CCQP), 118-121 (CCHP), 133-137 (CCQPT), 138-142 (CCQPT), 143-147 (CCRNT), 153-157 (CCGSS), 162-166 (CCHPT), 167-171 (CCQTI), 176-180 (CCQPS), 185-189 (CCSTP), 190-194 (CCQPT), 214-218 (CCRPT), 219-223 (CCQTT), 229-233 (CCRPS), 234-238 (CCCSP), 239-243 (CCVSS), and 244-248 (CCQPS). Residues 8–248 (CCQPTCCRTT…CCVSSCCQPS (241 aa)) are 32 X 5 AA repeats of C-C-[CGSVRQH]-[SQTNP]-[PTSI].

It belongs to the KRTAP type 9 family. Interacts with hair keratins.

Functionally, in the hair cortex, hair keratin intermediate filaments are embedded in an interfilamentous matrix, consisting of hair keratin-associated proteins (KRTAP), which are essential for the formation of a rigid and resistant hair shaft through their extensive disulfide bond cross-linking with abundant cysteine residues of hair keratins. The matrix proteins include the high-sulfur and high-glycine-tyrosine keratins. This is Keratin-associated protein 9-1 from Homo sapiens (Human).